A 301-amino-acid chain; its full sequence is HTH-type transcriptional activator NagR (301 aa).

The HTH lysR-type domain occupies 6–63 (IDLNLLVVFNQLLLDRSVSTAGEKLGLTQPAVSNSLKRLRAALKDDLFLRTSKGMEPT). Residues 23–42 (VSTAGEKLGLTQPAVSNSLK) constitute a DNA-binding region (H-T-H motif).

It belongs to the LysR transcriptional regulatory family.

Its function is as follows. May regulate the expression of the naphthalene (nagA-F) and salicylate (nagG-M) metabolism genes. This Ralstonia sp protein is HTH-type transcriptional activator NagR.